The primary structure comprises 743 residues: Catalase-peroxidase (743 aa).

The span at 1–15 shows a compositional bias: polar residues; the sequence is MSSDSRPPQPDTSTQ. The interval 1 to 40 is disordered; sequence MSSDSRPPQPDTSTQSNSESESPAISSPTPQDHAPMTNRD. Low complexity predominate over residues 16–28; that stretch reads SNSESESPAISSP. A cross-link (tryptophyl-tyrosyl-methioninium (Trp-Tyr) (with M-259)) is located at residues 110 to 233; it reads WHAAGTYRIQ…YGATTMGLIY (124 aa). The Proton acceptor role is filled by His111. A cross-link (tryptophyl-tyrosyl-methioninium (Tyr-Met) (with W-110)) is located at residues 233–259; it reads YVNPEGPEGKPDPVAAAHDIRETFARM. His274 contributes to the heme b binding site. The tract at residues 490-511 is disordered; the sequence is DKRGGANGGRLRLEPQKSWESN.

The protein belongs to the peroxidase family. Peroxidase/catalase subfamily. In terms of assembly, homodimer or homotetramer. It depends on heme b as a cofactor. In terms of processing, formation of the three residue Trp-Tyr-Met cross-link is important for the catalase, but not the peroxidase activity of the enzyme.

The catalysed reaction is H2O2 + AH2 = A + 2 H2O. The enzyme catalyses 2 H2O2 = O2 + 2 H2O. Its function is as follows. Bifunctional enzyme with both catalase and broad-spectrum peroxidase activity. This chain is Catalase-peroxidase, found in Mycobacterium ulcerans (strain Agy99).